The primary structure comprises 389 residues: 8-amino-7-oxononanoate synthase 2 (389 aa).

Arg21 contributes to the substrate binding site. 108-109 (GY) is a pyridoxal 5'-phosphate binding site. Residue His133 coordinates substrate. Pyridoxal 5'-phosphate-binding positions include Ser180, 205-208 (DDAH), and 234-237 (TLSK). Lys237 is modified (N6-(pyridoxal phosphate)lysine). Residue Thr351 coordinates substrate.

This sequence belongs to the class-II pyridoxal-phosphate-dependent aminotransferase family. BioF subfamily. Homodimer. Pyridoxal 5'-phosphate serves as cofactor.

It catalyses the reaction 6-carboxyhexanoyl-[ACP] + L-alanine + H(+) = (8S)-8-amino-7-oxononanoate + holo-[ACP] + CO2. The protein operates within cofactor biosynthesis; biotin biosynthesis. In terms of biological role, catalyzes the decarboxylative condensation of pimeloyl-[acyl-carrier protein] and L-alanine to produce 8-amino-7-oxononanoate (AON), [acyl-carrier protein], and carbon dioxide. In Bacillus subtilis (strain 168), this protein is 8-amino-7-oxononanoate synthase 2 (bioF).